Here is a 191-residue protein sequence, read N- to C-terminus: FDSFWFVQQWPPAVCSFQKSGSCPGSGLRTFTIHGLWPQGSGTSLTNCPQGSPFDITKISHLQSQLNTLWPNVLRANNQQFWSHEWTKHGTCSESTFNQAAYFKLAVDMRNNYDIIGALRPHAAGPNGRTKSRQAIKGFLKAKFGKFPGLRCRTDPQTKVSYLVQVVACFAQDGSTLIDCTRDTCGANFIF.

Gln-9 contributes to the RNA binding site. A disulfide bridge links Cys-15 with Cys-23. RNA is bound by residues His-34, 72-73 (NV), Arg-75, Phe-81, 84-85 (HE), and 88-89 (KH). His-34 serves as the catalytic Proton donor. 3 disulfides stabilise this stretch: Cys-48–Cys-92, Cys-152–Cys-185, and Cys-169–Cys-180. Glu-85 is an active-site residue. Catalysis depends on His-89, which acts as the Proton acceptor.

This sequence belongs to the RNase T2 family.

The enzyme catalyses a ribonucleotidyl-ribonucleotide-RNA + H2O = a 3'-end 3'-phospho-ribonucleotide-RNA + a 5'-end dephospho-ribonucleoside-RNA + H(+). In terms of biological role, ribonuclease cleaving preferentially the 5'-side of uridine. The chain is Ribonuclease MC from Momordica charantia (Bitter gourd).